The following is a 284-amino-acid chain: Bifunctional protein FolD (284 aa).

Residues 166-168 (GAS) and isoleucine 232 contribute to the NADP(+) site.

The protein belongs to the tetrahydrofolate dehydrogenase/cyclohydrolase family. In terms of assembly, homodimer.

It catalyses the reaction (6R)-5,10-methylene-5,6,7,8-tetrahydrofolate + NADP(+) = (6R)-5,10-methenyltetrahydrofolate + NADPH. The catalysed reaction is (6R)-5,10-methenyltetrahydrofolate + H2O = (6R)-10-formyltetrahydrofolate + H(+). It participates in one-carbon metabolism; tetrahydrofolate interconversion. Its function is as follows. Catalyzes the oxidation of 5,10-methylenetetrahydrofolate to 5,10-methenyltetrahydrofolate and then the hydrolysis of 5,10-methenyltetrahydrofolate to 10-formyltetrahydrofolate. This chain is Bifunctional protein FolD, found in Shewanella sp. (strain MR-7).